The primary structure comprises 163 residues: Phosphopantetheine adenylyltransferase (163 aa).

Substrate is bound at residue Ser10. Residues 10 to 11 (SF) and His18 contribute to the ATP site. Positions 42, 74, and 88 each coordinate substrate. Residues 89 to 91 (GLR), Glu99, and 124 to 130 (YSFLSSS) each bind ATP.

This sequence belongs to the bacterial CoaD family. In terms of assembly, homohexamer. It depends on Mg(2+) as a cofactor.

The protein localises to the cytoplasm. The enzyme catalyses (R)-4'-phosphopantetheine + ATP + H(+) = 3'-dephospho-CoA + diphosphate. Its pathway is cofactor biosynthesis; coenzyme A biosynthesis; CoA from (R)-pantothenate: step 4/5. Its function is as follows. Reversibly transfers an adenylyl group from ATP to 4'-phosphopantetheine, yielding dephospho-CoA (dPCoA) and pyrophosphate. The sequence is that of Phosphopantetheine adenylyltransferase from Bacillus anthracis (strain A0248).